The sequence spans 77 residues: Conotoxin CaHr91 (77 aa).

The signal sequence occupies residues 1–19; sequence MKLTCALIITVLFLSITAD. Residues 20–43 constitute a propeptide that is removed on maturation; it reads DSRGKQGYRALKSIAGMLNSKTVR. Cystine bridges form between cysteine 45–cysteine 60, cysteine 52–cysteine 65, and cysteine 59–cysteine 74.

It belongs to the conotoxin O1 superfamily. In terms of tissue distribution, expressed by the venom duct.

The protein resides in the secreted. In Conus capitaneus (Captain cone), this protein is Conotoxin CaHr91.